The chain runs to 152 residues: Deoxyuridine 5'-triphosphate nucleotidohydrolase (152 aa).

Substrate contacts are provided by residues 71-73 (RSG), Asn84, 88-90 (LID), and Met98.

This sequence belongs to the dUTPase family. The cofactor is Mg(2+).

The catalysed reaction is dUTP + H2O = dUMP + diphosphate + H(+). Its pathway is pyrimidine metabolism; dUMP biosynthesis; dUMP from dCTP (dUTP route): step 2/2. Functionally, this enzyme is involved in nucleotide metabolism: it produces dUMP, the immediate precursor of thymidine nucleotides and it decreases the intracellular concentration of dUTP so that uracil cannot be incorporated into DNA. This chain is Deoxyuridine 5'-triphosphate nucleotidohydrolase, found in Erwinia tasmaniensis (strain DSM 17950 / CFBP 7177 / CIP 109463 / NCPPB 4357 / Et1/99).